Reading from the N-terminus, the 137-residue chain is Large ribosomal subunit protein eL28 (137 aa).

Ser-2 carries the post-translational modification N-acetylserine. Glycyl lysine isopeptide (Lys-Gly) (interchain with G-Cter in SUMO2) cross-links involve residues Lys-58 and Lys-65. Ser-115 carries the post-translational modification Phosphoserine.

Belongs to the eukaryotic ribosomal protein eL28 family. As to quaternary structure, component of the large ribosomal subunit.

It localises to the cytoplasm. Functionally, component of the large ribosomal subunit. The ribosome is a large ribonucleoprotein complex responsible for the synthesis of proteins in the cell. This is Large ribosomal subunit protein eL28 (RPL28) from Homo sapiens (Human).